The sequence spans 353 residues: UPF0283 membrane protein YcjF (353 aa).

Residues Met-1–Pro-19 show a composition bias toward basic and acidic residues. Residues Met-1–Arg-35 are disordered. Transmembrane regions (helical) follow at residues Met-70–Thr-90, Val-100–Val-120, and Glu-213–Trp-233.

It belongs to the UPF0283 family.

It is found in the cell inner membrane. This Salmonella agona (strain SL483) protein is UPF0283 membrane protein YcjF.